The primary structure comprises 356 residues: LQARQQTVSALEDKIADYKRRMADAVSRKKMDTKPTDPTGIEPDDHLKERSSLRYGNVLDVNAIDIEEPSGQTADWYTIGVYVIGFTLPIILKALYMLSTRGRQTVKENKGTRIRFKDDTSFEDINGIRRPKHLYVSMPTAQSTMKAEELTPGRFRTIVCGLFPTQIQVRNIMSPVMGVIGFSFFVKDWADRIREFMEKECPFIKPEVKPGTPAQEAEFLKRNKVYFMQRQDVLDKNHVADIDKLIDYAASGDPTSPDNIESPNAPWVFACAPDRCPPTCIYVAGMAELGAFFSILQDMRNTIMASKTVGTAEEKLKKKSSFYQSYLRRTQSMGIQLDQRIILLYMLEWGKEMVDH.

Residues 1-28 (LQARQQTVSALEDKIADYKRRMADAVSR) adopt a coiled-coil conformation. Residues 26–35 (VSRKKMDTKP) show a composition bias toward basic and acidic residues. Residues 26–46 (VSRKKMDTKPTDPTGIEPDDH) are disordered. The tract at residues 37–205 (DPTGIEPDDH…FMEKECPFIK (169 aa)) is interaction with glycoprotein N. The interval 57-82 (NVLDVNAIDIEEPSGQTADWYTIGVY) is homomultimerization. An interaction with host RPS19 region spans residues 107-132 (KENKGTRIRFKDDTSFEDINGIRRPK). Residues 132–174 (KHLYVSMPTAQSTMKAEELTPGRFRTIVCGLFPTQIQVRNIMS) form a viral RNA-binding region. A YxxL motif is present at residues 135–138 (YVSM). The segment at 145-148 (MKAE) is interaction with host UBE2I/UBC9.

This sequence belongs to the hantavirus nucleocapsid protein family. In terms of assembly, homotrimer. Homomultimer. Homomultimerizes and binds to viral genomic RNA to form the nucleocapsid. Interacts with host MAP1LC3B; this interaction participates to the protection of Gn from virus-triggered autophagy. Interacts with host SNAP29; this interaction participates to the protection of glycoprotein N from virus-triggered autophagy. Interacts (via N-terminus) with host RPS19; this interaction probably mediates the loading of the 40S ribosomal subunit on viral capped mRNA during N-mediated translation initiation. Interacts with the viral RdRp. Interacts with host SUMO1 (via N-terminus). Interacts with host DAXX. Interacts with the viral glycoprotein N (via C-terminus). Interacts with the viral glycoprotein C (via C-terminus).

It is found in the virion. The protein resides in the host cytoplasm. It localises to the host perinuclear region. The protein localises to the host Golgi apparatus. Its subcellular location is the host cis-Golgi network. Its function is as follows. Encapsidates the genome protecting it from nucleases. The encapsidated genomic RNA is termed the nucleocapsid (NC) and serves as template for transcription and replication. The nucleocapsid has a left-handed helical structure. As a trimer, specifically binds and acts as a chaperone to unwind the panhandle structure formed by the viral RNA (vRNA) termini. Involved in the transcription and replication initiation of vRNA by mediating primer annealing. Plays a role in cap snatching by sequestering capped RNAs in P bodies for use by the viral RdRp during transcription initiation. Substitutes for the cellular cap-binding complex (eIF4F) to preferentially facilitate the translation of capped mRNAs. Initiates the translation by specifically binding to the cap and 40S ribosomal subunit. Prevents the viral glycoprotein N (Gn) from autophagy-dependent breakdown maybe by blocking autophagosome formation. Inhibits host EIF2AK2/PKR dimerization to prevent PKR-induced translational shutdown in cells and thus the activation of the antiviral state. Also displays sequence-unspecific DNA endonuclease activity. The sequence is that of Nucleoprotein (N) from Puumala virus (strain Berkel).